Here is a 308-residue protein sequence, read N- to C-terminus: tRNA dimethylallyltransferase (308 aa).

An ATP-binding site is contributed by 14 to 21 (GPTASGKT). Substrate is bound at residue 16-21 (TASGKT). Interaction with substrate tRNA stretches follow at residues 39–42 (DSAL), 163–167 (QRLSR), and 244–249 (RCVGYR).

The protein belongs to the IPP transferase family. Monomer. Requires Mg(2+) as cofactor.

It catalyses the reaction adenosine(37) in tRNA + dimethylallyl diphosphate = N(6)-dimethylallyladenosine(37) in tRNA + diphosphate. Catalyzes the transfer of a dimethylallyl group onto the adenine at position 37 in tRNAs that read codons beginning with uridine, leading to the formation of N6-(dimethylallyl)adenosine (i(6)A). In Shewanella baltica (strain OS185), this protein is tRNA dimethylallyltransferase.